Here is a 405-residue protein sequence, read N- to C-terminus: Solute carrier family 35 member E2B (405 aa).

Residues 1–28 are disordered; sequence MSSSVKTPALEELVPGSEEKPKGRSPLS. 10 helical membrane-spanning segments follow: residues 81–101, 106–126, 142–162, 167–187, 195–215, 219–241, 264–284, 296–316, 326–346, and 347–367; these read LWFF…SLLG, MLGA…TLVP, FLMT…LGLV, VAVS…VIMS, TGLL…LCTA, SFNV…QNVF, AAAV…PVIG, VVLL…TAYA, FSVA…IVFG, and NKIT…VLLY. The disordered stretch occupies residues 380 to 405; the sequence is SLAAATGRAPDDTVEPLLPQDPRQHP.

It belongs to the TPT transporter family. SLC35E subfamily.

Its subcellular location is the membrane. Putative transporter. This is Solute carrier family 35 member E2B (SLC35E2B) from Homo sapiens (Human).